The chain runs to 234 residues: Golgi SNAP receptor complex member 1 (234 aa).

Over 1–212 (MSETWEALRK…MQKIKTKKQK (212 aa)) the chain is Cytoplasmic. Residues 54–121 (VTTEIEGLIE…RDNVDQVLQR (68 aa)) are a coiled coil. A helical; Anchor for type IV membrane protein membrane pass occupies residues 213-233 (NTMILAGVISACLIFTIFWII). Position 234 (N234) is a topological domain, vesicular.

The protein belongs to the GOSR1 family. In terms of assembly, component of several multiprotein Golgi SNARE complexes.

It is found in the golgi apparatus membrane. Involved in transport from the ER to the Golgi apparatus as well as in intra-Golgi transport. It belongs to a super-family of proteins called t-SNAREs or soluble NSF (N-ethylmaleimide-sensitive factor) attachment protein receptor. Cooperates with ykt-6 for proper expression of Golgi-resident proteins. Required along with ykt-6 for normal embryonic development, seam cell division or differentiation, and ray formation. The chain is Golgi SNAP receptor complex member 1 from Caenorhabditis briggsae.